The following is a 276-amino-acid chain: Dermonecrotic toxin LdSicTox-alphaIB2 (276 aa).

The active site involves His-5. Mg(2+) is bound by residues Glu-25 and Asp-27. His-41 serves as the catalytic Nucleophile. Intrachain disulfides connect Cys-45–Cys-51 and Cys-47–Cys-190. Asp-85 lines the Mg(2+) pocket. N-linked (GlcNAc...) asparagine glycosylation is present at Asn-253.

It belongs to the arthropod phospholipase D family. Class II subfamily. It depends on Mg(2+) as a cofactor. As to expression, expressed by the venom gland.

The protein resides in the secreted. It carries out the reaction an N-(acyl)-sphingosylphosphocholine = an N-(acyl)-sphingosyl-1,3-cyclic phosphate + choline. The enzyme catalyses an N-(acyl)-sphingosylphosphoethanolamine = an N-(acyl)-sphingosyl-1,3-cyclic phosphate + ethanolamine. The catalysed reaction is a 1-acyl-sn-glycero-3-phosphocholine = a 1-acyl-sn-glycero-2,3-cyclic phosphate + choline. It catalyses the reaction a 1-acyl-sn-glycero-3-phosphoethanolamine = a 1-acyl-sn-glycero-2,3-cyclic phosphate + ethanolamine. Its function is as follows. Dermonecrotic toxins cleave the phosphodiester linkage between the phosphate and headgroup of certain phospholipids (sphingolipid and lysolipid substrates), forming an alcohol (often choline) and a cyclic phosphate. This toxin acts on sphingomyelin (SM). It may also act on ceramide phosphoethanolamine (CPE), lysophosphatidylcholine (LPC) and lysophosphatidylethanolamine (LPE), but not on lysophosphatidylserine (LPS), and lysophosphatidylglycerol (LPG). It acts by transphosphatidylation, releasing exclusively cyclic phosphate products as second products. Induces dermonecrosis, hemolysis, increased vascular permeability, edema, inflammatory response, and platelet aggregation. The chain is Dermonecrotic toxin LdSicTox-alphaIB2 from Loxosceles deserta (Desert recluse spider).